Reading from the N-terminus, the 201-residue chain is Flavin prenyltransferase UbiX (201 aa).

Residues 23–25 (GAS), Ser-49, 103–106 (SIKT), and Arg-138 contribute to the FMN site. Dimethylallyl phosphate-binding residues include Tyr-168 and Lys-184.

The protein belongs to the UbiX/PAD1 family.

The enzyme catalyses dimethylallyl phosphate + FMNH2 = prenylated FMNH2 + phosphate. In terms of biological role, flavin prenyltransferase that catalyzes the synthesis of the prenylated FMN cofactor (prenyl-FMN) for 4-hydroxy-3-polyprenylbenzoic acid decarboxylase UbiD. The prenyltransferase is metal-independent and links a dimethylallyl moiety from dimethylallyl monophosphate (DMAP) to the flavin N5 and C6 atoms of FMN. The chain is Flavin prenyltransferase UbiX from Saccharolobus solfataricus (strain ATCC 35092 / DSM 1617 / JCM 11322 / P2) (Sulfolobus solfataricus).